Reading from the N-terminus, the 481-residue chain is Cobyric acid synthase (481 aa).

Positions 247-433 constitute a GATase cobBQ-type domain; that stretch reads AFNVVVPLLP…LHGLFDVPDS (187 aa). Cysteine 328 serves as the catalytic Nucleophile. Residue histidine 425 is part of the active site.

This sequence belongs to the CobB/CobQ family. CobQ subfamily.

The protein operates within cofactor biosynthesis; adenosylcobalamin biosynthesis. Its function is as follows. Catalyzes amidations at positions B, D, E, and G on adenosylcobyrinic A,C-diamide. NH(2) groups are provided by glutamine, and one molecule of ATP is hydrogenolyzed for each amidation. This chain is Cobyric acid synthase, found in Alcanivorax borkumensis (strain ATCC 700651 / DSM 11573 / NCIMB 13689 / SK2).